Consider the following 327-residue polypeptide: Cyclic AMP-responsive element-binding protein 1 (327 aa).

Disordered stretches follow at residues 1–27 and 94–113; these read MTME…QMTV and SEDS…RREI. The KID domain occupies 87 to 146; it reads QISTIAESEDSQESVDSVTDSQKRREILSRRPSYRKILNDLSSDAPGVPRIEEEKSEEET. Position 119 is a phosphoserine; by CaMK1, CaMK2, CaMK4, PKB/AKT1 or PKB/AKT2, RPS6KA3, RPS6KA4, RPS6KA5 and SGK1 (Ser119). A Glycyl lysine isopeptide (Lys-Gly) (interchain with G-Cter in SUMO2) cross-link involves residue Lys122. A disordered region spans residues 126-151; sequence DLSSDAPGVPRIEEEKSEEETSAPAI. Position 128 is a phosphoserine; by CaMK2 (Ser128). Ser257 carries the phosphoserine; by HIPK2 modification. The bZIP domain maps to 269–327; that stretch reads ARKREVRLMKNREAARECRRKKKEYVKCLENRVAVLENQNKTLIEELKALKDLYCHKSD. The basic motif stretch occupies residues 270–295; it reads RKREVRLMKNREAARECRRKKKEYVK. Glycyl lysine isopeptide (Lys-Gly) (interchain with G-Cter in SUMO1) cross-links involve residues Lys271 and Lys290. Residues 297-318 are leucine-zipper; sequence LENRVAVLENQNKTLIEELKAL.

Belongs to the bZIP family. Interacts with PPRC1. Binds DNA as a dimer. This dimer is stabilized by magnesium ions. Interacts, through the bZIP domain, with the coactivators CRTC1/TORC1, CRTC2/TORC2 and CRTC3/TORC3. Interacts (phosphorylated form) with TOX3. When phosphorylated on Ser-119, binds CREBBP. Interacts with ARRB1. Binds to HIPK2. Interacts with SGK1. Interacts with CREBL2; regulates CREB1 phosphorylation, stability and transcriptional activity. Interacts with TSSK4; this interaction facilitates phosphorylation on Ser-119. Forms a complex with KMT2A and CREBBP. Interacts with TOX4; CREB1 is required for full induction of TOX4-dependent activity and the interaction is increased by cAMP and inhibited by insulin. Post-translationally, phosphorylation of Ser-119 allows CREBBP binding. Stimulated by phosphorylation. Phosphorylated Ser-128 can be detected in the suprachiasmatic nucleus (SCN), the amygdala, the cortex, and the hippocampus but not in the striatum nor in the cerebellum. In the SCN, phosphorylation of Ser-128 and Ser-119 are stimulated by light exposure and submitted to circadian oscillations. In the retina, only phosphorylation of Ser-119 can be detected upon light exposure. Phosphorylation of both Ser-119 and Ser-128 in the SCN regulates the activity of CREB and participates in circadian rhythm generation. Phosphorylated upon calcium influx by CaMK4 and CaMK2 on Ser-119. CaMK4 is much more potent than CAMK2 in activating CREB. Phosphorylated by CaMK2 on Ser-128. Phosphorylation of Ser-128 blocks CREB-mediated transcription even when Ser-119 is phosphorylated. Phosphorylated by CaMK1. Phosphorylation of Ser-271 by HIPK2 in response to genotoxic stress promotes CREB1 activity, facilitating the recruitment of the coactivator CBP. Phosphorylated at Ser-119 by RPS6KA3, RPS6KA4 and RPS6KA5 in response to mitogenic or stress stimuli. CREBL2 positively regulates phosphorylation at Ser-119 thereby stimulating CREB1 transcriptional activity. In liver, phosphorylation is induced by fasting or glucagon in a circadian fashion. Phosphorylated by TSSK4 on Ser-119. Sumoylated with SUMO1. Sumoylation on Lys-290, but not on Lys-271, is required for nuclear localization of this protein. Sumoylation is enhanced under hypoxia, promoting nuclear localization and stabilization. In terms of tissue distribution, expressed in the heart (at protein level).

The protein resides in the nucleus. Phosphorylation-dependent transcription factor that stimulates transcription upon binding to the DNA cAMP response element (CRE), a sequence present in many viral and cellular promoters. Transcription activation is enhanced by the TORC coactivators which act independently of Ser-119 phosphorylation. Involved in different cellular processes including the synchronization of circadian rhythmicity and the differentiation of adipose cells. Regulates the expression of apoptotic and inflammatory response factors in cardiomyocytes in response to ERFE-mediated activation of AKT signaling. In Mus musculus (Mouse), this protein is Cyclic AMP-responsive element-binding protein 1 (Creb1).